A 139-amino-acid chain; its full sequence is Toxin FitB (139 aa).

One can recognise a PINc domain in the interval 2-123; the sequence is ILLDTNVISE…HSLTVATRDT (122 aa). 2 residues coordinate Mg(2+): Asp-5 and Asp-104.

This sequence belongs to the PINc/VapC protein family. Forms a heterodimer with FitA, 4 FitAB heterodimers form a complex that binds to promoter DNA. The complex is also seen in solution. This protein does not actually contact DNA. It depends on Mg(2+) as a cofactor.

In terms of biological role, toxic component of a type II toxin-antitoxin (TA) system. Plays a role in the speed with which bacteria traverse human epithelial cells; disruption of the locus increases the speed of trafficking about 2-4-fold. FitAB binds to its own promoter better than FitA alone. The expected nuclease activity was not observed for the FitAB complex, perhaps because FitA (the antitoxin) prevents metal binding and thus catalysis by FitB. This Neisseria gonorrhoeae (strain ATCC 700825 / FA 1090) protein is Toxin FitB (fitB).